We begin with the raw amino-acid sequence, 393 residues long: S-adenosylmethionine synthase (393 aa).

Position 9 (Glu-9) interacts with Mg(2+). His-15 is a binding site for ATP. Position 43 (Glu-43) interacts with K(+). The L-methionine site is built by Glu-56 and Gln-99. Residues 167 to 169 (DGK), 235 to 238 (SGRF), Asp-246, 252 to 253 (RK), Ala-269, Lys-273, and Lys-277 contribute to the ATP site. L-methionine is bound at residue Asp-246. Lys-277 is a binding site for L-methionine.

Belongs to the AdoMet synthase family. Homotetramer. The cofactor is Mn(2+). Mg(2+) serves as cofactor. Requires Co(2+) as cofactor. It depends on K(+) as a cofactor.

It is found in the cytoplasm. It catalyses the reaction L-methionine + ATP + H2O = S-adenosyl-L-methionine + phosphate + diphosphate. It participates in amino-acid biosynthesis; S-adenosyl-L-methionine biosynthesis; S-adenosyl-L-methionine from L-methionine: step 1/1. Functionally, catalyzes the formation of S-adenosylmethionine from methionine and ATP. The reaction comprises two steps that are both catalyzed by the same enzyme: formation of S-adenosylmethionine (AdoMet) and triphosphate, and subsequent hydrolysis of the triphosphate. In Gossypium hirsutum (Upland cotton), this protein is S-adenosylmethionine synthase (SAMS).